A 90-amino-acid polypeptide reads, in one-letter code: Small ribosomal subunit protein uS15c (90 aa).

This sequence belongs to the universal ribosomal protein uS15 family. In terms of assembly, part of the 30S ribosomal subunit.

It localises to the plastid. It is found in the chloroplast. The sequence is that of Small ribosomal subunit protein uS15c (rps15) from Nandina domestica (Heavenly bamboo).